Reading from the N-terminus, the 210-residue chain is Imidazoleglycerol-phosphate dehydratase (210 aa).

The disordered stretch occupies residues 1-23 (MNDSLLSNGHAPPLRQATVDRQT).

The protein belongs to the imidazoleglycerol-phosphate dehydratase family.

The protein resides in the cytoplasm. It catalyses the reaction D-erythro-1-(imidazol-4-yl)glycerol 3-phosphate = 3-(imidazol-4-yl)-2-oxopropyl phosphate + H2O. The protein operates within amino-acid biosynthesis; L-histidine biosynthesis; L-histidine from 5-phospho-alpha-D-ribose 1-diphosphate: step 6/9. The chain is Imidazoleglycerol-phosphate dehydratase from Thermosynechococcus vestitus (strain NIES-2133 / IAM M-273 / BP-1).